We begin with the raw amino-acid sequence, 117 residues long: uncharacterized protein (117 aa).

The next 3 membrane-spanning stretches (helical) occupy residues 32 to 52 (VSSS…VTVV), 56 to 76 (VGVA…VTLL), and 87 to 107 (LSWC…SFFF).

The protein resides in the membrane. This is an uncharacterized protein from Saccharomyces cerevisiae (strain ATCC 204508 / S288c) (Baker's yeast).